Here is a 457-residue protein sequence, read N- to C-terminus: Glutamate--tRNA ligase 1 (457 aa).

The 'HIGH' region motif lies at P9–N19. The 'KMSKS' region signature appears at G250–R254. K253 lines the ATP pocket.

The protein belongs to the class-I aminoacyl-tRNA synthetase family. Glutamate--tRNA ligase type 1 subfamily. As to quaternary structure, monomer.

Its subcellular location is the cytoplasm. The catalysed reaction is tRNA(Glu) + L-glutamate + ATP = L-glutamyl-tRNA(Glu) + AMP + diphosphate. Catalyzes the attachment of glutamate to tRNA(Glu) in a two-step reaction: glutamate is first activated by ATP to form Glu-AMP and then transferred to the acceptor end of tRNA(Glu). This Brucella ovis (strain ATCC 25840 / 63/290 / NCTC 10512) protein is Glutamate--tRNA ligase 1.